A 227-amino-acid chain; its full sequence is Phosphoglycolate phosphatase (227 aa).

Asp-11 (nucleophile) is an active-site residue. Residues Asp-11 and Asp-13 each contribute to the Mg(2+) site. Lys-155 contacts substrate. The Mg(2+) site is built by Asp-178 and Asp-182.

The protein belongs to the archaeal SPP-like hydrolase family. Mg(2+) serves as cofactor.

It catalyses the reaction 2-phosphoglycolate + H2O = glycolate + phosphate. Functionally, catalyzes the dephosphorylation of 2-phosphoglycolate. This is Phosphoglycolate phosphatase from Haloarcula marismortui (strain ATCC 43049 / DSM 3752 / JCM 8966 / VKM B-1809) (Halobacterium marismortui).